The primary structure comprises 760 residues: Xaa-Pro dipeptidyl-peptidase (760 aa).

Catalysis depends on charge relay system residues Ser349, Asp469, and His499.

Belongs to the peptidase S15 family. In terms of assembly, homodimer.

It is found in the cytoplasm. The catalysed reaction is Hydrolyzes Xaa-Pro-|- bonds to release unblocked, N-terminal dipeptides from substrates including Ala-Pro-|-p-nitroanilide and (sequentially) Tyr-Pro-|-Phe-Pro-|-Gly-Pro-|-Ile.. Its function is as follows. Removes N-terminal dipeptides sequentially from polypeptides having unsubstituted N-termini provided that the penultimate residue is proline. This Streptococcus pyogenes serotype M28 (strain MGAS6180) protein is Xaa-Pro dipeptidyl-peptidase.